The following is a 257-amino-acid chain: Undecaprenyl-diphosphatase (257 aa).

8 helical membrane-spanning segments follow: residues 4–24 (LFKAIILGIIQGITEFLPISS), 51–71 (HVGTLISLLYCFWKDWINIFF), 78–98 (LFIIIGTIPAGIAGIAFHDLI), 106–126 (LIIVVTLILVGFLMLYAEKVG), 133–153 (ITLSDAVVIGTAQAIALIPGV), 171–191 (AYAAKFSFLLSTPAIAGAAML), 207–227 (LFIIGVISAAITGIIAIKFLL), and 235–255 (LNLFIYYRWFLAVVIFLLYFF).

Belongs to the UppP family.

It is found in the cell inner membrane. The enzyme catalyses di-trans,octa-cis-undecaprenyl diphosphate + H2O = di-trans,octa-cis-undecaprenyl phosphate + phosphate + H(+). In terms of biological role, catalyzes the dephosphorylation of undecaprenyl diphosphate (UPP). Confers resistance to bacitracin. This is Undecaprenyl-diphosphatase from Thermodesulfovibrio yellowstonii (strain ATCC 51303 / DSM 11347 / YP87).